The sequence spans 278 residues: Ras-related protein rapC (278 aa).

Residue Gly10–Thr17 coordinates GTP. The short motif at Tyr32–Tyr40 is the Effector region element. GTP is bound by residues Asp58–Thr62 and Asn119–Asp122. Disordered stretches follow at residues Asn176–Ser209 and Ser236–Met278. Low complexity-rich tracts occupy residues Gly198–Ser209 and Ser236–Asn251. The residue at position 275 (Cys275) is a Cysteine methyl ester. Cys275 is lipidated: S-geranylgeranyl cysteine. Residues Leu276–Met278 constitute a propeptide, removed in mature form.

This sequence belongs to the small GTPase superfamily. Ras family.

The protein localises to the cell membrane. The enzyme catalyses GTP + H2O = GDP + phosphate + H(+). This is Ras-related protein rapC (rapC) from Dictyostelium discoideum (Social amoeba).